A 213-amino-acid polypeptide reads, in one-letter code: Uridine kinase (213 aa).

Position 15-22 (15-22 (GASASGKS)) interacts with ATP.

The protein belongs to the uridine kinase family.

It localises to the cytoplasm. The enzyme catalyses uridine + ATP = UMP + ADP + H(+). It catalyses the reaction cytidine + ATP = CMP + ADP + H(+). It participates in pyrimidine metabolism; CTP biosynthesis via salvage pathway; CTP from cytidine: step 1/3. The protein operates within pyrimidine metabolism; UMP biosynthesis via salvage pathway; UMP from uridine: step 1/1. This chain is Uridine kinase, found in Erwinia tasmaniensis (strain DSM 17950 / CFBP 7177 / CIP 109463 / NCPPB 4357 / Et1/99).